The following is a 170-amino-acid chain: 3-hydroxyanthranilate 3,4-dioxygenase (170 aa).

R44 lines the O2 pocket. Residues H48, E54, and H92 each contribute to the Fe cation site. E54 is a substrate binding site. R96 and E106 together coordinate substrate. Residues C121, C124, C158, and C161 each contribute to the a divalent metal cation site.

This sequence belongs to the 3-HAO family. The cofactor is Fe(2+).

It is found in the cytoplasm. The catalysed reaction is 3-hydroxyanthranilate + O2 = (2Z,4Z)-2-amino-3-carboxymuconate 6-semialdehyde. It functions in the pathway cofactor biosynthesis; NAD(+) biosynthesis; quinolinate from L-kynurenine: step 3/3. Its function is as follows. Catalyzes the oxidative ring opening of 3-hydroxyanthranilate to 2-amino-3-carboxymuconate semialdehyde, which spontaneously cyclizes to quinolinate. This is 3-hydroxyanthranilate 3,4-dioxygenase from Scheffersomyces stipitis (strain ATCC 58785 / CBS 6054 / NBRC 10063 / NRRL Y-11545) (Yeast).